The primary structure comprises 106 residues: UPF0145 protein MA_3383 (106 aa).

This sequence belongs to the UPF0145 family.

The protein is UPF0145 protein MA_3383 of Methanosarcina acetivorans (strain ATCC 35395 / DSM 2834 / JCM 12185 / C2A).